The primary structure comprises 365 residues: WAT1-related protein At4g01440 (365 aa).

The next 10 helical transmembrane spans lie at 8–28 (WTPVIIMVMINSALGLANALV), 40–60 (VIATYRLAISTLFLAPIAFFW), 72–92 (ILVQLFFSALVGASLTQYFFL), 101–121 (TLACAFISMTPAITFVMALIF), 132–152 (AGMGMVMGALICIGGALLLTM), 181–201 (WIIGCVLLFAGSSCFGSWMLI), 213–233 (YSSTVVLSFFGTIQCALLSLI), 249–269 (IVTIVYAGAVAQGICTVGTSW), 277–297 (IFTSIFTPVGLIFATLFDFLI), and 302–322 (IFLGSVVGSGVVIFGLYIFLL). 2 EamA domains span residues 25–144 (NALV…LICI) and 196–321 (GSWM…YIFL).

This sequence belongs to the drug/metabolite transporter (DMT) superfamily. Plant drug/metabolite exporter (P-DME) (TC 2.A.7.4) family.

The protein resides in the membrane. This chain is WAT1-related protein At4g01440, found in Arabidopsis thaliana (Mouse-ear cress).